The primary structure comprises 387 residues: Signal-regulatory protein gamma (387 aa).

The first 28 residues, 1–28 (MPVPASWPHPPGPFLLLTLLLGLTEVAG), serve as a signal peptide directing secretion. An Ig-like V-type domain is found at 29 to 137 (EEELQMIQPE…ENVEFKSGPG (109 aa)). Residues 29–360 (EEELQMIQPE…QKDQSSDATP (332 aa)) lie on the Extracellular side of the membrane. Cystine bridges form between Cys-53–Cys-119 and Cys-168–Cys-226. Ig-like C1-type domains lie at 146–245 (PSAP…ANLS) and 252–340 (PTLE…LAVS). 4 N-linked (GlcNAc...) asparagine glycosylation sites follow: Asn-243, Asn-268, Asn-309, and Asn-317. Cys-271 and Cys-329 are disulfide-bonded. Residues 361–383 (GPASSLTALLLIAVLLGPIYVPW) form a helical membrane-spanning segment. Topologically, residues 384-387 (KQKT) are cytoplasmic.

As to quaternary structure, interacts with CD47. In terms of tissue distribution, detected in liver, and at very low levels in brain, heart, lung, pancreas, kidney, placenta and skeletal muscle. Expressed on CD4+ T-cells, CD8+ T-cells, CD56-bright natural killer (NK) cells, CD20+ cells, and all activated NK cells. Mainly present in the paracortical T-cell area of lymph nodes, with only sparse positive cells in the mantle and in the germinal center of B-cell follicles. In the thymus, primarily expressed in the medulla on mature T-lymphocytes that have undergone thymic selection.

It localises to the membrane. In terms of biological role, probable immunoglobulin-like cell surface receptor. On binding with CD47, mediates cell-cell adhesion. Engagement on T-cells by CD47 on antigen-presenting cells results in enhanced antigen-specific T-cell proliferation and costimulates T-cell activation. The chain is Signal-regulatory protein gamma (SIRPG) from Homo sapiens (Human).